Consider the following 679-residue polypeptide: UvrABC system protein B (679 aa).

Positions Glu-31–Ile-414 constitute a Helicase ATP-binding domain. Residue Gly-44–Thr-51 participates in ATP binding. Residues Tyr-97–Ile-120 carry the Beta-hairpin motif. Positions Gln-436–Ile-589 constitute a Helicase C-terminal domain. The UVR domain occupies Gln-639 to Gln-674.

It belongs to the UvrB family. As to quaternary structure, forms a heterotetramer with UvrA during the search for lesions. Interacts with UvrC in an incision complex.

Its subcellular location is the cytoplasm. Functionally, the UvrABC repair system catalyzes the recognition and processing of DNA lesions. A damage recognition complex composed of 2 UvrA and 2 UvrB subunits scans DNA for abnormalities. Upon binding of the UvrA(2)B(2) complex to a putative damaged site, the DNA wraps around one UvrB monomer. DNA wrap is dependent on ATP binding by UvrB and probably causes local melting of the DNA helix, facilitating insertion of UvrB beta-hairpin between the DNA strands. Then UvrB probes one DNA strand for the presence of a lesion. If a lesion is found the UvrA subunits dissociate and the UvrB-DNA preincision complex is formed. This complex is subsequently bound by UvrC and the second UvrB is released. If no lesion is found, the DNA wraps around the other UvrB subunit that will check the other stand for damage. The chain is UvrABC system protein B from Haemophilus influenzae (strain ATCC 51907 / DSM 11121 / KW20 / Rd).